The following is a 450-amino-acid chain: UDP-N-acetylmuramoylalanine--D-glutamate ligase (450 aa).

119 to 125 provides a ligand contact to ATP; the sequence is GSNGKTT.

The protein belongs to the MurCDEF family.

Its subcellular location is the cytoplasm. It catalyses the reaction UDP-N-acetyl-alpha-D-muramoyl-L-alanine + D-glutamate + ATP = UDP-N-acetyl-alpha-D-muramoyl-L-alanyl-D-glutamate + ADP + phosphate + H(+). It participates in cell wall biogenesis; peptidoglycan biosynthesis. Functionally, cell wall formation. Catalyzes the addition of glutamate to the nucleotide precursor UDP-N-acetylmuramoyl-L-alanine (UMA). This Bacillus mycoides (strain KBAB4) (Bacillus weihenstephanensis) protein is UDP-N-acetylmuramoylalanine--D-glutamate ligase.